We begin with the raw amino-acid sequence, 532 residues long: Undecaprenyl-phosphate glucose phosphotransferase (532 aa).

The next 5 membrane-spanning stretches (helical) occupy residues 81 to 101 (QVVV…CIAW), 110 to 130 (ELSG…FLFP), 155 to 175 (VAFG…PFGV), 183 to 203 (WLTF…YILH), and 344 to 364 (TASV…ALAI).

The protein belongs to the bacterial sugar transferase family.

The protein localises to the membrane. The enzyme catalyses di-trans,octa-cis-undecaprenyl phosphate + UDP-alpha-D-glucose = alpha-D-glucosyl di-trans,octa-cis-undecaprenyl diphosphate + UMP. Functionally, involved in the biosynthesis of the exopolysaccharide acetan, a water-soluble polysaccharide involved in production of bacterial cellulose (BC). The sequence is that of Undecaprenyl-phosphate glucose phosphotransferase (aceA) from Komagataeibacter xylinus (Gluconacetobacter xylinus).